We begin with the raw amino-acid sequence, 173 residues long: MSLRLVSPIKAFADGIVAVAIAVVLMFGLANTPRAVAADERLQFTATTLSGAPFDGASLQGKPAVLWFWTPWCPFCNAEAPSLSQVAAANPAVTFVGIATRADVGAMQSFVSKYNLNFTNLNDADGVIWARYNVPWQPAFVFYRADGTSTFVNNPTAAMSQDELSGRVAALTS.

The signal sequence occupies residues 1-38; sequence MSLRLVSPIKAFADGIVAVAIAVVLMFGLANTPRAVAA. The cysteines at positions 73 and 76 are disulfide-linked.

This sequence belongs to the thioredoxin family.

It is found in the secreted. Its function is as follows. Disulfide oxidoreductase that catalyzes the oxidation of reduced, unfolded secreted proteins to form disulfide bonds. Despite a weak homology to thioredoxin this cannot serve as a substrate for thioredoxin reductase. The sequence is that of Soluble secreted antigen MPT53 (mpt53) from Mycobacterium bovis (strain ATCC BAA-935 / AF2122/97).